The primary structure comprises 1216 residues: MNLSQEHAINQNLHKNQKNEEKIEKKTINKDGRGQMNYDGEEGQGEKSRFQKMVENEKIEEPQQKDENIPNTDVIERKEVGVIERINSEDVPILMTDNATDYKVLQHNLKKGKVSKKSKEQIEQISKQEENDMLEYLKNYKSNEEFTIQLEDLLSFETYFSRDELHLLYREFKTISKSGMFMSKEDFISKLTPFSRNADLTISLMNAIDRNGDQKIAFPEFVQALSIMCRGTKKERLRFTFEICDFNGDSLVSRDEVYSTVKAISDIFSKFGYSKDKFGDPSEAVDSIFSSGLTTNGIYLHNKKELTLNEFLERGELNPDLSKCFGMFDYFYLKFIGQIDLLFKDKEINMNGQLTKIKPKTIFNFNISHRRTLSLRDGFLIVYKKKKFKHDEDKPSKVIFLPGSTVKVVVGSQPSKKKKFLSKKFHNYYGFRVTKGNYNRFFLMENRDEALNWVNAIRFHSRQGFRFQSFSKVRSNISVEWFINGSSYYNELAETIRRAKHEIFITGWWVSPYVYLQRDNGIENMEKSRLDRILTEKAKEGVKVYVLMWNETNLGVQLGSRHAKNWLEGCHSNIHVIRHPKRYPLSWSHHQKNAIIDQQIAFVGGIDICLMRYETSKFQLTDDQGKRFPGKDYGNLLGTVIRTGDPKKDQFNRRECPRMPWHDVHTKIVGPSAKDVASNFIQRWNHAIYVERSNRFQPILVPKNYTGLPSDDAKPDKWKNLVSNIRKGFSHVSYGREKPTHYQRAGDNPKVRSHTRQGAFGLQSDQIDNKIDKQKNNSTNSENSENSYSEFDEEDEEGNQEEEDEDEFDEFEKDENQKQENSKIPFNNKPSDAGGLKSKNYKNNNNNNIIESLKDEESFELPGTPKIDLNNDKLLKSIYHLSSNMSENSCVVQMVRSICPWSAGTDVEDSCYKAYLGLIKNAQHFIYIQNLFFISSCGSKLPKNRIALAILNRVRRAITLKEKFRVIIMVPISPSGDLALASSRMIIGWTNRTISQGGQSILELLKNEFPDVDLDQYISFNSIRQWEANGDRIFTEQIYVHSKVLIVDDRVAVIGSCNINDRSMMGSRDSELAVVVSDQSKLLITMNGKPFKVGKFPHTLRVGLWKTHLNLTDSEISSIIDPITDNAFINIWRKTARNNSIIYKEVFGDCILENQRRLGIVQKKYIPKTNELIVQLSQIQGVLIEYPLDMFCESNLFNEQVGIFTAESYVDVSIFT.

Over residues 1 to 14 (MNLSQEHAINQNLH) the composition is skewed to polar residues. A disordered region spans residues 1 to 48 (MNLSQEHAINQNLHKNQKNEEKIEKKTINKDGRGQMNYDGEEGQGEKS). Over residues 17–33 (QKNEEKIEKKTINKDGR) the composition is skewed to basic and acidic residues. EF-hand domains follow at residues 196-231 (RNAD…MCRG) and 232-267 (TKKE…ISDI). Residues Asp209, Asn211, Asp213, Lys215, and Glu220 each contribute to the Ca(2+) site. Residues 347–462 (EINMNGQLTK…WVNAIRFHSR (116 aa)) enclose the PH domain. The region spanning 585–612 (LSWSHHQKNAIIDQQIAFVGGIDICLMR) is the PLD phosphodiesterase 1 domain. Residues His590, Lys592, and Asp597 contribute to the active site. A disordered region spans residues 732 to 844 (VSYGREKPTH…GLKSKNYKNN (113 aa)). The segment covering 776–789 (NNSTNSENSENSYS) has biased composition (low complexity). The segment covering 790-813 (EFDEEDEEGNQEEEDEDEFDEFEK) has biased composition (acidic residues). The region spanning 1036–1063 (EQIYVHSKVLIVDDRVAVIGSCNINDRS) is the PLD phosphodiesterase 2 domain. Catalysis depends on residues His1041, Lys1043, and Asp1048.

The protein belongs to the phospholipase D family.

The protein resides in the cytoplasmic vesicle. It is found in the cytoplasm. The protein localises to the cell cortex. It carries out the reaction a 1,2-diacyl-sn-glycero-3-phosphocholine + H2O = a 1,2-diacyl-sn-glycero-3-phosphate + choline + H(+). With respect to regulation, inhibited by butan-1-ol. In terms of biological role, plays a role in cell growth. Hydrolyzes membrane phospholipids, such as PtdCho (phosphatidylcholine), producing the free headgroup and PtdOH (phosphatidic acid; signaling molecule on its own). Involved in the inhibition of actin-based motility and endocytosis. Its inhibition causes complete collapse of F-actin organization. Plays an important role in cell migration by localizing along the anterior cell membrane. Overexpression leads to the inability to aggregate even at higher cell density. Also known as a negative regulator of quorum sensing. The sequence is that of Phospholipase D B (pldB) from Dictyostelium discoideum (Social amoeba).